A 2357-amino-acid polypeptide reads, in one-letter code: Protein transport protein Sec16A (2357 aa).

Disordered regions lie at residues 1–25 and 57–303; these read MQPP…RSVF and FSRQ…STFR. Low complexity-rich tracts occupy residues 64–76 and 210–227; these read STPL…SSPP and QMPG…PSGQ. Over residues 285–303 the composition is skewed to polar residues; that stretch reads HLQSGSHLANNSDPESTFR. 3 positions are modified to phosphoserine: Ser-296, Ser-314, and Ser-331. Disordered stretches follow at residues 335–359, 508–540, 553–603, 758–828, 924–987, 1006–1038, and 1059–1151; these read NPLA…GSGC, APDA…ARPQ, KPED…TGIF, VQPP…NPPV, LLVQ…SSHQ, VNVY…PNLD, and QELV…APGP. Low complexity predominate over residues 520-536; the sequence is SVSSSYSSRSHGRLSGS. Phosphoserine occurs at positions 559, 569, 587, 589, and 592. Phosphothreonine is present on Thr-593. Ser-595 is modified (phosphoserine). Composition is skewed to polar residues over residues 766-778 and 803-825; these read SGQQ…SAAP and LQSQ…SLQN. The segment covering 1006-1028 has biased composition (polar residues); the sequence is VNVYNPSHSDSLASQQSVASHPR. The interval 1019 to 1890 is required for localization to endoplasmic reticulum exit sites; sequence SQQSVASHPR…QQVERQIKEG (872 aa). Position 1069 is a phosphoserine (Ser-1069). Residues 1080 to 1101 show a composition bias toward polar residues; that stretch reads ELSNPESLPAQGQAQNSAQSPA. Residues 1101–1400 are interaction with MIA3; it reads ASLVLVDAGQ…EAPLPPGSFH (300 aa). Residues 1102–1405 form a required for endoplasmic reticulum localization region; sequence SLVLVDAGQQ…PGSFHGDFAY (304 aa). Residues 1118–1131 show a composition bias toward low complexity; that stretch reads QSSSVSLVSSGSGQ. Residues 1138-1151 are compositionally biased toward pro residues; the sequence is QPWPQPVPALAPGP. Residues Ser-1207, Ser-1229, and Ser-1305 each carry the phosphoserine modification. Positions 1215 to 1248 are disordered; it reads YPEPERPSSRASHSSERPPPRQGYPEGYYSSKSG. Positions 1216 to 1233 are enriched in basic and acidic residues; the sequence is PEPERPSSRASHSSERPP. The span at 1307–1322 shows a compositional bias: basic and acidic residues; the sequence is FGDRPEKRDNNWRYDP. The interval 1307-1378 is disordered; it reads FGDRPEKRDN…SLSSHSHQSQ (72 aa). Thr-1325 is subject to Phosphothreonine. Phosphoserine is present on residues Ser-1327, Ser-1347, Ser-1350, Ser-1356, Ser-1359, Ser-1362, Ser-1369, Ser-1573, and Ser-1601. Basic and acidic residues predominate over residues 1333-1354; the sequence is DPHRDPYGEEVDRRSVHSEHSA. A compositionally biased stretch (low complexity) spans 1356–1375; the sequence is SLHSAHSLASRRSSLSSHSH. The tract at residues 1434 to 1890 is central conserved domain (CCD); mediates interaction with RNF183, LRRK2 and SEC13; sequence QVSSRPTSPE…QQVERQIKEG (457 aa). Thr-1907 is modified (phosphothreonine). Ser-1939, Ser-1964, Ser-2022, and Ser-2042 each carry phosphoserine. 3 disordered regions span residues 2049–2110, 2141–2181, and 2226–2328; these read KFAN…SWFF, VNLN…PVNM, and NLFV…MPFY. A Phosphothreonine modification is found at Thr-2054. A phosphoserine mark is found at Ser-2056, Ser-2073, and Ser-2083. Over residues 2087–2106 the composition is skewed to basic and acidic residues; that stretch reads ETKRPGQAAKKETKEPKKGE. A required for interaction with SEC23A region spans residues 2106–2357; sequence ESWFFRWLPG…IGQRKHLVLN (252 aa). Ser-2271 and Ser-2291 each carry phosphoserine. 2 stretches are compositionally biased toward low complexity: residues 2289 to 2302 and 2310 to 2324; these read ELSR…LSRE and APGD…PSGA.

It belongs to the SEC16 family. In terms of assembly, SEC16A and SEC16B are each present in multiple copies in a heteromeric complex. Interacts with SEC23A. Interacts with RNF183 and RNF152. Interacts with LRRK2 (via ROC domain). Interacts with SEC13. Interacts with RAB10. Interacts with MIA3. Interacts with GORASP2 in response to ER stress. As to expression, ubiquitous. Expressed at higher levels in the pancreas.

The protein resides in the endoplasmic reticulum membrane. It localises to the golgi apparatus membrane. It is found in the cytoplasm. Its subcellular location is the perinuclear region. The protein localises to the cytosol. The protein resides in the microsome membrane. In terms of biological role, acts as a molecular scaffold that plays a key role in the organization of the endoplasmic reticulum exit sites (ERES), also known as transitional endoplasmic reticulum (tER). SAR1A-GTP-dependent assembly of SEC16A on the ER membrane forms an organized scaffold defining an ERES. Required for secretory cargo traffic from the endoplasmic reticulum to the Golgi apparatus. Mediates the recruitment of MIA3/TANGO to ERES. Regulates both conventional (ER/Golgi-dependent) and GORASP2-mediated unconventional (ER/Golgi-independent) trafficking of CFTR to cell membrane. Positively regulates the protein stability of E3 ubiquitin-protein ligases RNF152 and RNF183 and the ER localization of RNF183. Acts as a RAB10 effector in the regulation of insulin-induced SLC2A4/GLUT4 glucose transporter-enriched vesicles delivery to the cell membrane in adipocytes. This is Protein transport protein Sec16A (SEC16A) from Homo sapiens (Human).